Consider the following 198-residue polypeptide: Recombination protein RecR (198 aa).

The C4-type zinc finger occupies 57–72 (CSICGNITEEDPCEIC). The Toprim domain maps to 80-175 (SIILVVEEPK…TVTRLAHGLS (96 aa)).

The protein belongs to the RecR family.

Its function is as follows. May play a role in DNA repair. It seems to be involved in an RecBC-independent recombinational process of DNA repair. It may act with RecF and RecO. The protein is Recombination protein RecR of Enterococcus faecalis (strain ATCC 700802 / V583).